The following is a 172-amino-acid chain: MSSKRAKTKTTKKRPQRATSNVFAMFDQSQIQEFKEAFNMIDQNRDGFIDKEDLHDMLASMGKNPTDEYLDAMMNEAPGPINFTMFLTMFGEKLNGTDPEDVIRNAFACFDEEAIGTIQEDYLRELLTTMGDRFTDEEVDELYREAPIDKKGNFNYIEFTRILKHGAKDKDD.

The segment covering 1 to 16 (MSSKRAKTKTTKKRPQ) has biased composition (basic residues). Positions 1–20 (MSSKRAKTKTTKKRPQRATS) are disordered. Residue Thr-19 is modified to Phosphothreonine; by MLCK. Residue Ser-20 is modified to Phosphoserine; by MLCK. 3 consecutive EF-hand domains span residues 29–64 (SQIQ…MGKN), 98–133 (DPED…MGDR), and 134–169 (FTDE…GAKD). Residues Asp-42, Asn-44, Asp-46, and Asp-53 each contribute to the Ca(2+) site.

In terms of assembly, myosin is a hexamer of 2 heavy chains and 4 light chains. Phosphorylation increases the actin-activated myosin ATPase activity and thereby regulates the contractile activity.

Myosin regulatory subunit that plays an important role in regulation of both smooth muscle and nonmuscle cell contractile activity via its phosphorylation. Implicated in cytokinesis, receptor capping, and cell locomotion. This chain is Myosin regulatory light chain RLC-A (Rlc-a), found in Rattus norvegicus (Rat).